We begin with the raw amino-acid sequence, 397 residues long: MVMFKKIKSFEVVFNDPEKVYGSGEKVAGRVIVEVCEVTRVKAVRILACGVAKVLWMQGSQQCKQTLDYLRYEDTLLLEEQPTAGENEMVIMRPGNKYEYKFGFELPQGPLGTSFKGKYGCVDYWVKAFLDRPSQPTQEAKKNFEVMDLVDVNTPDLMAPVSAKKEKKVSCMFIPDGRVSVSARIDRKGFCEGDDISIHADFENTCSRIVVPKAAIVARHTYLANGQTKVFTQKLSSVRGNHIISGTCASWRGKSLRVQKIRPSILGCNILKVEYSLLIYVSVPGSKKVILDLPLVIGSRSGLSSRTSSMASRTSSEMSWIDLNIPDTPEAPPCYMDIIPEDHRLESPTTPLLDDVDDSQDSPIFMYAPEFQFMPPPTYTEVDPCVLNNNNNNNNVQ.

A Glycyl lysine isopeptide (Lys-Gly) (interchain with G-Cter in ubiquitin) cross-link involves residue Lys-213. At Ser-362 the chain carries Phosphoserine.

It belongs to the arrestin family. In terms of assembly, homodimer; disulfide-linked. Interacts with TXN/thioredoxin through its redox-active site. Interacts with transcriptional repressors ZBTB16, ZBTB32 and HDAC1. Interacts with DDIT4. In terms of processing, ubiquitinated; undergoes heterotypic 'Lys-48'-/'Lys-63'-branched polyubiquitination catalyzed by ITCH and UBR5 resulting in proteasomal degradation. Deubiquitinated by USP5, leading to TXNIP stabilization. As to expression, ubiquitously expressed.

The protein localises to the cytoplasm. May act as an oxidative stress mediator by inhibiting thioredoxin activity or by limiting its bioavailability. Interacts with COPS5 and restores COPS5-induced suppression of CDKN1B stability, blocking the COPS5-mediated translocation of CDKN1B from the nucleus to the cytoplasm. Functions as a transcriptional repressor, possibly by acting as a bridge molecule between transcription factors and corepressor complexes, and over-expression will induce G0/G1 cell cycle arrest. Required for the maturation of natural killer cells. Acts as a suppressor of tumor cell growth. Inhibits the proteasomal degradation of DDIT4, and thereby contributes to the inhibition of the mammalian target of rapamycin complex 1 (mTORC1). This chain is Thioredoxin-interacting protein (Txnip), found in Mus musculus (Mouse).